Consider the following 289-residue polypeptide: Bifunctional protein FolD 2 (289 aa).

NADP(+) is bound by residues 162-164 (GRS), S187, and I228.

This sequence belongs to the tetrahydrofolate dehydrogenase/cyclohydrolase family. Homodimer.

It carries out the reaction (6R)-5,10-methylene-5,6,7,8-tetrahydrofolate + NADP(+) = (6R)-5,10-methenyltetrahydrofolate + NADPH. It catalyses the reaction (6R)-5,10-methenyltetrahydrofolate + H2O = (6R)-10-formyltetrahydrofolate + H(+). Its pathway is one-carbon metabolism; tetrahydrofolate interconversion. Its function is as follows. Catalyzes the oxidation of 5,10-methylenetetrahydrofolate to 5,10-methenyltetrahydrofolate and then the hydrolysis of 5,10-methenyltetrahydrofolate to 10-formyltetrahydrofolate. In Deinococcus geothermalis (strain DSM 11300 / CIP 105573 / AG-3a), this protein is Bifunctional protein FolD 2.